Reading from the N-terminus, the 438-residue chain is Glutaryl-CoA dehydrogenase, mitochondrial (438 aa).

A mitochondrion-targeting transit peptide spans 1–44 (MALRGVSVQLLSRVPGLRVFRTWVSSAAQTEKVGRTQSQLAKSS). Substrate-binding positions include 138–139 (RS) and serine 186. Residues 177–186 (FGLTEPNSGS), serine 186, and 212–214 (WIT) each bind FAD. Lysine 240 carries the N6-acetyllysine modification. 287–294 (FGCLNNGR) contributes to the substrate binding site. Residues arginine 319, glutamine 330, and 387–391 (DMLGG) contribute to the FAD site. Glutamate 414 functions as the Proton acceptor in the catalytic mechanism. Glycine 415 serves as a coordination point for substrate. FAD contacts are provided by residues threonine 416, 416–418 (THD), and phenylalanine 434.

Belongs to the acyl-CoA dehydrogenase family. As to quaternary structure, homotetramer. FAD is required as a cofactor.

The protein resides in the mitochondrion matrix. The enzyme catalyses glutaryl-CoA + oxidized [electron-transfer flavoprotein] + 2 H(+) = (2E)-butenoyl-CoA + reduced [electron-transfer flavoprotein] + CO2. It functions in the pathway amino-acid metabolism; lysine degradation. It participates in amino-acid metabolism; tryptophan metabolism. Its function is as follows. Catalyzes the oxidative decarboxylation of glutaryl-CoA to crotonyl-CoA and CO(2) in the degradative pathway of L-lysine, L-hydroxylysine, and L-tryptophan metabolism. It uses electron transfer flavoprotein as its electron acceptor. The protein is Glutaryl-CoA dehydrogenase, mitochondrial (GCDH) of Macaca fascicularis (Crab-eating macaque).